The sequence spans 545 residues: Chaperonin GroEL (545 aa).

ATP contacts are provided by residues 29 to 32, Lys50, 86 to 90, Gly414, 477 to 479, and Asp493; these read TMGP, DGTTT, and DAA.

Belongs to the chaperonin (HSP60) family. In terms of assembly, forms a cylinder of 14 subunits composed of two heptameric rings stacked back-to-back. Interacts with the co-chaperonin GroES.

It is found in the cytoplasm. The catalysed reaction is ATP + H2O + a folded polypeptide = ADP + phosphate + an unfolded polypeptide.. In terms of biological role, together with its co-chaperonin GroES, plays an essential role in assisting protein folding. The GroEL-GroES system forms a nano-cage that allows encapsulation of the non-native substrate proteins and provides a physical environment optimized to promote and accelerate protein folding. The protein is Chaperonin GroEL of Campylobacter lari (strain RM2100 / D67 / ATCC BAA-1060).